The chain runs to 59 residues: Light-harvesting protein B-800-850 alpha chain A (59 aa).

Topologically, residues 1–11 (MNQARIWTVVK) are cytoplasmic. The helical transmembrane segment at 12–35 (PTVGLPLLLGSVTVIAILVHFAVL) threads the bilayer. H31 contributes to the a bacteriochlorophyll binding site. The Periplasmic segment spans residues 36–59 (SHTTWFSKYWNGKAAAIESSVNVG).

Belongs to the antenna complex alpha subunit family. As to quaternary structure, the core complex is formed by different alpha and beta chains, binding bacteriochlorophyll molecules, and arranged most probably in tetrameric structures disposed around the reaction center. The non-pigmented gamma chains may constitute additional components.

The protein resides in the cell inner membrane. Antenna complexes are light-harvesting systems, which transfer the excitation energy to the reaction centers. In Rhodopseudomonas palustris (strain ATCC BAA-98 / CGA009), this protein is Light-harvesting protein B-800-850 alpha chain A (pucAA).